Consider the following 490-residue polypeptide: Glutamyl-tRNA(Gln) amidotransferase subunit A (490 aa).

Active-site charge relay system residues include K78 and S158. Positions 131-159 are disordered; it reads SNETSRFGPPINPWRRKGDNAGLTPGGSS. Catalysis depends on S182, which acts as the Acyl-ester intermediate.

This sequence belongs to the amidase family. GatA subfamily. In terms of assembly, heterotrimer of A, B and C subunits.

The enzyme catalyses L-glutamyl-tRNA(Gln) + L-glutamine + ATP + H2O = L-glutaminyl-tRNA(Gln) + L-glutamate + ADP + phosphate + H(+). Allows the formation of correctly charged Gln-tRNA(Gln) through the transamidation of misacylated Glu-tRNA(Gln) in organisms which lack glutaminyl-tRNA synthetase. The reaction takes place in the presence of glutamine and ATP through an activated gamma-phospho-Glu-tRNA(Gln). This is Glutamyl-tRNA(Gln) amidotransferase subunit A from Hyphomonas neptunium (strain ATCC 15444).